A 433-amino-acid chain; its full sequence is Glutamate-1-semialdehyde 2,1-aminomutase (433 aa).

At K266 the chain carries N6-(pyridoxal phosphate)lysine.

It belongs to the class-III pyridoxal-phosphate-dependent aminotransferase family. HemL subfamily. In terms of assembly, homodimer. Pyridoxal 5'-phosphate serves as cofactor.

It is found in the cytoplasm. The catalysed reaction is (S)-4-amino-5-oxopentanoate = 5-aminolevulinate. It participates in porphyrin-containing compound metabolism; protoporphyrin-IX biosynthesis; 5-aminolevulinate from L-glutamyl-tRNA(Glu): step 2/2. The sequence is that of Glutamate-1-semialdehyde 2,1-aminomutase from Psychrobacter cryohalolentis (strain ATCC BAA-1226 / DSM 17306 / VKM B-2378 / K5).